The primary structure comprises 93 residues: MSNVCIIAWVYGRVQGVGFRYTTQHEAQRLGLTGYAKNMDDGSVEVVACGDAAQVEKLIKWLKEGGPRSARVDKILTEPHSPRETLTGFSIRY.

An intrachain disulfide couples C5 to C49. Residues 5-93 (CIIAWVYGRV…ETLTGFSIRY (89 aa)) form the Acylphosphatase-like domain. Residues R20 and N38 contribute to the active site.

Belongs to the acylphosphatase family.

The enzyme catalyses an acyl phosphate + H2O = a carboxylate + phosphate + H(+). The chain is Acylphosphatase from Salmonella typhi.